Here is a 405-residue protein sequence, read N- to C-terminus: Transcriptional regulatory protein DEP1 (405 aa).

The segment covering 1 to 12 (MSQQTPQESEQT) has biased composition (low complexity). Disordered stretches follow at residues 1 to 26 (MSQQ…SVLS) and 49 to 171 (AGTE…VMPS). The residue at position 56 (S56) is a Phosphoserine. Composition is skewed to basic and acidic residues over residues 86–108 (SLKR…KVPG) and 116–139 (EEEK…ARDE). S120 is subject to Phosphoserine. The segment covering 140 to 157 (QGDEGDNEEENNEEDNEN) has biased composition (acidic residues). At S370 the chain carries Phosphoserine.

In terms of assembly, component of the RPD3C(L) complex composed of at least ASH1, CTI6, DEP1, PHO23, RPD3, RXT2, RXT3, SAP30, SDS3, SIN3, UME1 and UME6.

The protein resides in the cytoplasm. Its subcellular location is the nucleus. In terms of biological role, component of the RPD3C(L) histone deacetylase complex (HDAC) responsible for the deacetylation of lysine residues on the N-terminal part of the core histones (H2A, H2B, H3 and H4). Histone deacetylation gives a tag for epigenetic repression and plays an important role in transcriptional regulation, cell cycle progression and developmental events. The protein is Transcriptional regulatory protein DEP1 (DEP1) of Saccharomyces cerevisiae (strain ATCC 204508 / S288c) (Baker's yeast).